The primary structure comprises 123 residues: Cliotide T4 (123 aa).

The first 28 residues, 1–28, serve as a signal peptide directing secretion; the sequence is MASLRIAPLALFFFLAASVMFTVEKTEA. The cyclopeptide (Gly-Asn) cross-link spans 29-58; the sequence is GIPCGESCVFIPCITAAIGCSCKSKVCYRN. Intrachain disulfides connect Cys-32–Cys-48, Cys-36–Cys-50, and Cys-41–Cys-55. Residues 59–123 constitute a propeptide, removed in mature form; sequence HVIAAEAKTM…KDHLKMSITN (65 aa).

In terms of processing, contains 3 disulfide bonds. This is a cyclic peptide. As to expression, expressed in flower, stem, shoot, root, leaf, seed, pod and nodule (at protein level).

In terms of biological role, probably participates in a plant defense mechanism. Active against Gram-negative bacteria E.coli ATCC 700926 (MIC=1.0 uM), K.pneumoniae ATTC 13883 (MIC=5.5 uM) and P.aeruginosa ATCC 39018 (MIC=7.5 uM). Has hemolytic and cytotoxic activity. The polypeptide is Cliotide T4 (Clitoria ternatea (Butterfly pea)).